The sequence spans 480 residues: Cytochrome P450 724B1 (480 aa).

The chain crosses the membrane as a helical span at residues 6–26 (LVLAALVILLALLLTLVLSHF). C426 serves as a coordination point for heme.

This sequence belongs to the cytochrome P450 family. Heme is required as a cofactor. In terms of tissue distribution, ubiquitously expressed at low levels, but preferentially in the internodes and the florets before flowering.

The protein localises to the membrane. The catalysed reaction is campesterol + reduced [NADPH--hemoprotein reductase] + O2 = (22S)-22-hydroxycampesterol + oxidized [NADPH--hemoprotein reductase] + H2O + H(+). It functions in the pathway plant hormone biosynthesis; brassinosteroid biosynthesis. Functionally, involved in brassinosteroid biosynthesis. May catalyze a C6-oxidation step and may be involved to supply 6-deoxotyphasterol and typhasterol. Involved in internode elongation and seed development. Catalyzes the conversion of campesterol (CR) to (22S)-22-hydroxycampesterol (22-OHCR, 22-hydroxyCR). The sequence is that of Cytochrome P450 724B1 from Oryza sativa subsp. japonica (Rice).